The sequence spans 336 residues: DNA repair protein Rad51 homolog (336 aa).

Residues 1 to 10 are compositionally biased toward polar residues; the sequence is MEKLTNVQAQ. The tract at residues 1–20 is disordered; it reads MEKLTNVQAQQEEEEEEGPL. 124 to 131 contacts ATP; it reads GEFRCGKT.

The protein belongs to the RecA family. RAD51 subfamily. In terms of assembly, interacts with Rrp6; the interaction is required for the recruitment of spn-A to the DNA-damage response foci. In terms of tissue distribution, highly expressed in ovaries.

The protein localises to the nucleus. Its subcellular location is the cytoplasm. Its function is as follows. Plays an important role in homologous strand exchange, a key step in DNA repair through homologous recombination (HR). Binds to single and double-stranded DNA and exhibits DNA-dependent ATPase activity. Underwinds duplex DNA. Spindle genes are required for each of the symmetry-breaking steps that generate polarity during egg axis formation; oocyte positioning at the posterior of the cyst to generate the first AP polarity and inhibition of gurken (grk) signaling to the follicle cell layer to polarize first the AP axis and then DV axis. May have a role in female meiosis. The polypeptide is DNA repair protein Rad51 homolog (spn-A) (Drosophila melanogaster (Fruit fly)).